Here is a 1586-residue protein sequence, read N- to C-terminus: COP1-interactive protein 1 (1586 aa).

Positions 10–84 (LKSFFEPHFD…RQYDDLTGEI (75 aa)) constitute an NAB domain. The tract at residues 88-119 (VNGKGESSSSSSSDSDSDHSSKRKVKRNGNGK) is disordered. 4 coiled-coil regions span residues 128-411 (TGAL…LKES), 437-1196 (ASEL…LKEE), 1225-1336 (LETL…TEAT), and 1372-1406 (MESL…SNQK). LRR repeat units lie at residues 173–187 (SEEI…TEKL), 188–210 (EDEK…VAGK), 216–239 (NQKL…GIKR), 261–285 (TSNL…MNSA), and 287–309 (EENK…GQTT). The segment covering 249–262 (DWKTTSDQLKDETS) has biased composition (basic and acidic residues). The segment at 249–286 (DWKTTSDQLKDETSNLKQQLEASEQRVSELTSGMNSAE) is disordered. Residues 325–353 (KEKESEHSSLVELHKTHERESSSQVKELE) form a disordered region. 20 LRR repeats span residues 384-410 (IAEL…QLKE), 437-461 (ASEL…LKAA), 473-498 (VETM…KLKD), 560-586 (IAEL…QLKE), 613-637 (VSEL…LKDA), 649-674 (LEIM…ELKD), 768-792 (LSEL…LNAA), 824-850 (LAES…AHKR), 856-880 (VKEL…LNSS), 902-929 (ESTI…LFSL), 944-968 (LRGL…LKAA), 990-1014 (QIMV…ESKL), 1077-1101 (ISEL…LEDN), 1120-1144 (RAEL…SEEA), 1195-1220 (EEII…KIKG), 1247-1272 (VQMH…NLKN), 1372-1396 (MESL…ISNI), 1398-1417 (VKLR…LTEK), 1426-1448 (AKHL…TYRG), and 1450-1474 (IKEI…LTEK). Positions 430-456 (QRDSSTRASELEAQLESSKQQVSDLSA) are disordered. Residues 444 to 455 (LESSKQQVSDLS) show a composition bias toward polar residues. The tract at residues 965–985 (LKAAEEESRTMSTKISETSDE) is disordered. Residues 1496 to 1530 (VIERNHEKEKMNKEIEKKDEEIKKLGGKVREDEKE) adopt a coiled-coil conformation.

Interacts with COP1 coiled-coil region. Mainly expressed in photosynthetic and vascular tissues. Accumulates in both dark-grown and light-grown seedlings roots and shoots, leaves and flowers (at protein level).

It is found in the cell membrane. Its subcellular location is the cytoplasm. The protein resides in the cytoskeleton. Functionally, positive regulator of abscisic acid (ABA)-mediated signaling pathways involved in abiotic stress responses (e.g. osmotic stress) and leading to various plant adaptation (e.g. stomata closure). This chain is COP1-interactive protein 1, found in Arabidopsis thaliana (Mouse-ear cress).